A 93-amino-acid polypeptide reads, in one-letter code: Stage III sporulation protein D (93 aa).

Residues 4–75 (YIKERTIKIG…IRHLRGGEAT (72 aa)) form the HTH deoR-type domain. The H-T-H motif DNA-binding region spans 21-40 (KTVRVIAKEFGVSKSTVHKD).

Functionally, this protein regulates the transcription of sigK, which encodes mother cell chamber RNA polymerase sigma-factor (sigma K). This is Stage III sporulation protein D (spoIIID) from Bacillus subtilis (strain 168).